Consider the following 633-residue polypeptide: Phosphomethylpyrimidine synthase (633 aa).

Substrate contacts are provided by residues Asn245, Met274, Tyr303, His339, 359 to 361 (SRG), 400 to 403 (DGLR), and Glu439. Residue His443 participates in Zn(2+) binding. Tyr466 is a substrate binding site. Zn(2+) is bound at residue His507. 3 residues coordinate [4Fe-4S] cluster: Cys587, Cys590, and Cys595.

This sequence belongs to the ThiC family. As to quaternary structure, homodimer. It depends on [4Fe-4S] cluster as a cofactor.

The enzyme catalyses 5-amino-1-(5-phospho-beta-D-ribosyl)imidazole + S-adenosyl-L-methionine = 4-amino-2-methyl-5-(phosphooxymethyl)pyrimidine + CO + 5'-deoxyadenosine + formate + L-methionine + 3 H(+). It functions in the pathway cofactor biosynthesis; thiamine diphosphate biosynthesis. Its function is as follows. Catalyzes the synthesis of the hydroxymethylpyrimidine phosphate (HMP-P) moiety of thiamine from aminoimidazole ribotide (AIR) in a radical S-adenosyl-L-methionine (SAM)-dependent reaction. The sequence is that of Phosphomethylpyrimidine synthase from Neisseria meningitidis serogroup C (strain 053442).